The primary structure comprises 494 residues: Glutamate--tRNA ligase (494 aa).

Positions 10-20 (PSPTGDPHVGT) match the 'HIGH' region motif. Residues Cys-107, Cys-109, Cys-134, and His-136 each contribute to the Zn(2+) site. The short motif at 251 to 255 (KLSKR) is the 'KMSKS' region element. Lys-254 is an ATP binding site.

The protein belongs to the class-I aminoacyl-tRNA synthetase family. Glutamate--tRNA ligase type 1 subfamily. As to quaternary structure, monomer. The cofactor is Zn(2+).

It localises to the cytoplasm. It carries out the reaction tRNA(Glu) + L-glutamate + ATP = L-glutamyl-tRNA(Glu) + AMP + diphosphate. Its function is as follows. Catalyzes the attachment of glutamate to tRNA(Glu) in a two-step reaction: glutamate is first activated by ATP to form Glu-AMP and then transferred to the acceptor end of tRNA(Glu). In Pseudomonas aeruginosa (strain UCBPP-PA14), this protein is Glutamate--tRNA ligase.